The chain runs to 473 residues: MRAPVAVVILAAGKGTRMRSAQPKVLQPLAGRPLLAHVLDTALALGPEQVHVVYGHGGDQVAAAHADYPVYWVEQPRQLGTGHAVACALPQIPDDHRVLVLYGDVPLVTPETLKPLLAGDGLELLAARVPDPTGYGRIIRDDDGAVVAIVEEKDADPEQRRVDEVNTGLLAASAGDLRRWMAALSADNAQGEYYLTDAVAAARADGTPVRARFTSEAGEASGINDLVQLAEVEEAFQRRWARRLLQGGLRLVAPHRFTLRGAVRHGTDCAVDADCTLEGEVQLGHGVQVGQGVILRDCVIEDGAQVGPYTVVEQAHIGAGCRVGPFAHLRPGTVLEEGARVGNFVETKAARLGPGAKANHLTYVGDAEVGARANLGAGTITCNYDGAEKHRTQIGEDAFIGSGSQLVAPVQVGARATIGAGTTLTSDAPADALTVGRSRARTIPGWQHPGLTGRRGPPDDNDATPASGGAKEE.

Residues 1–226 form a pyrophosphorylase region; sequence MRAPVAVVIL…AGEASGINDL (226 aa). UDP-N-acetyl-alpha-D-glucosamine is bound by residues 10–13, Lys-24, Gln-75, 80–81, 102–104, Gly-136, Glu-151, Asn-166, and Asn-224; these read LAAG, GT, and YGD. Mg(2+) is bound at residue Asp-104. Residue Asn-224 participates in Mg(2+) binding. Residues 227 to 247 are linker; it reads VQLAEVEEAFQRRWARRLLQG. The interval 248 to 473 is N-acetyltransferase; sequence GLRLVAPHRF…TPASGGAKEE (226 aa). Residues Arg-330 and Lys-348 each contribute to the UDP-N-acetyl-alpha-D-glucosamine site. The Proton acceptor role is filled by His-360. UDP-N-acetyl-alpha-D-glucosamine contacts are provided by Tyr-363 and Asn-374. Residues Ala-377, 383–384, Ser-402, Ala-420, and Arg-437 contribute to the acetyl-CoA site; that span reads NY. A disordered region spans residues 439–473; it reads RARTIPGWQHPGLTGRRGPPDDNDATPASGGAKEE.

This sequence in the N-terminal section; belongs to the N-acetylglucosamine-1-phosphate uridyltransferase family. In the C-terminal section; belongs to the transferase hexapeptide repeat family. In terms of assembly, homotrimer. It depends on Mg(2+) as a cofactor.

Its subcellular location is the cytoplasm. It catalyses the reaction alpha-D-glucosamine 1-phosphate + acetyl-CoA = N-acetyl-alpha-D-glucosamine 1-phosphate + CoA + H(+). The enzyme catalyses N-acetyl-alpha-D-glucosamine 1-phosphate + UTP + H(+) = UDP-N-acetyl-alpha-D-glucosamine + diphosphate. It participates in nucleotide-sugar biosynthesis; UDP-N-acetyl-alpha-D-glucosamine biosynthesis; N-acetyl-alpha-D-glucosamine 1-phosphate from alpha-D-glucosamine 6-phosphate (route II): step 2/2. It functions in the pathway nucleotide-sugar biosynthesis; UDP-N-acetyl-alpha-D-glucosamine biosynthesis; UDP-N-acetyl-alpha-D-glucosamine from N-acetyl-alpha-D-glucosamine 1-phosphate: step 1/1. The protein operates within bacterial outer membrane biogenesis; LPS lipid A biosynthesis. Functionally, catalyzes the last two sequential reactions in the de novo biosynthetic pathway for UDP-N-acetylglucosamine (UDP-GlcNAc). The C-terminal domain catalyzes the transfer of acetyl group from acetyl coenzyme A to glucosamine-1-phosphate (GlcN-1-P) to produce N-acetylglucosamine-1-phosphate (GlcNAc-1-P), which is converted into UDP-GlcNAc by the transfer of uridine 5-monophosphate (from uridine 5-triphosphate), a reaction catalyzed by the N-terminal domain. In Halorhodospira halophila (strain DSM 244 / SL1) (Ectothiorhodospira halophila (strain DSM 244 / SL1)), this protein is Bifunctional protein GlmU.